We begin with the raw amino-acid sequence, 190 residues long: Inosine triphosphate pyrophosphatase (190 aa).

ITP is bound at residue 10–15 (TGNAKK). Glu40 serves as a coordination point for Mg(2+). ITP is bound by residues Lys52, 68-69 (DT), Lys85, 144-147 (FGWD), Lys167, and 172-173 (HR).

Belongs to the HAM1 NTPase family. In terms of assembly, homodimer. The cofactor is Mg(2+). Requires Mn(2+) as cofactor.

Its subcellular location is the cytoplasm. It carries out the reaction ITP + H2O = IMP + diphosphate + H(+). It catalyses the reaction dITP + H2O = dIMP + diphosphate + H(+). The enzyme catalyses XTP + H2O = XMP + diphosphate + H(+). Its function is as follows. Pyrophosphatase that hydrolyzes non-canonical purine nucleotides such as inosine triphosphate (ITP), deoxyinosine triphosphate (dITP) or xanthosine 5'-triphosphate (XTP) to their respective monophosphate derivatives. The enzyme does not distinguish between the deoxy- and ribose forms. Probably excludes non-canonical purines from RNA and DNA precursor pools, thus preventing their incorporation into RNA and DNA and avoiding chromosomal lesions. The sequence is that of Inosine triphosphate pyrophosphatase from Culex quinquefasciatus (Southern house mosquito).